The following is a 158-amino-acid chain: Transcription elongation factor GreA (158 aa).

The tract at residues 41-61 is disordered; it reads GDLSENAEYHAAKEDQSHNEG. A coiled-coil region spans residues 51-74; it reads AAKEDQSHNEGRIAELEDKLARAE.

The protein belongs to the GreA/GreB family.

In terms of biological role, necessary for efficient RNA polymerase transcription elongation past template-encoded arresting sites. The arresting sites in DNA have the property of trapping a certain fraction of elongating RNA polymerases that pass through, resulting in locked ternary complexes. Cleavage of the nascent transcript by cleavage factors such as GreA or GreB allows the resumption of elongation from the new 3'terminus. GreA releases sequences of 2 to 3 nucleotides. The sequence is that of Transcription elongation factor GreA from Nitrobacter hamburgensis (strain DSM 10229 / NCIMB 13809 / X14).